Here is a 179-residue protein sequence, read N- to C-terminus: Auxin-induced protein IAA6 (179 aa).

The EAR-like (transcriptional repression) motif lies at 13–17; it reads LRLGL. Residues 31–52 are disordered; that stretch reads FSEIDGGVEENGGSGDRKSVDK. One can recognise a PB1 domain in the interval 75–163; the sequence is KMYMKVSMDG…KRLRIMKRSD (89 aa).

This sequence belongs to the Aux/IAA family. As to quaternary structure, homodimers and heterodimers.

It is found in the nucleus. In terms of biological role, aux/IAA proteins are short-lived transcriptional factors that function as repressors of early auxin response genes at low auxin concentrations. Repression is thought to result from the interaction with auxin response factors (ARFs), proteins that bind to the auxin-responsive promoter element (AuxRE). Formation of heterodimers with ARF proteins may alter their ability to modulate early auxin response genes expression. This is Auxin-induced protein IAA6 (IAA6) from Pisum sativum (Garden pea).